A 352-amino-acid polypeptide reads, in one-letter code: Photosystem II D2 protein (352 aa).

A helical transmembrane segment spans residues 40 to 60 (CAYLALGGWLTGTTFVTSWYT). Chlorophyll a is bound at residue H117. A helical transmembrane segment spans residues 124–140 (GFMLRQFEIARLVGVRP). Pheophytin a contacts are provided by Q129 and N142. A helical membrane pass occupies residues 152–165 (VFVSVFLIYPLGQS). Position 197 (H197) interacts with chlorophyll a. A helical transmembrane segment spans residues 207–227 (GALLCAIHGATVENTLYKDGE). A plastoquinone contacts are provided by H214 and F261. Fe cation is bound at residue H214. Position 268 (H268) interacts with Fe cation. Residues 278–294 (GLWMSSIGVVGLALNLR) traverse the membrane as a helical segment.

Belongs to the reaction center PufL/M/PsbA/D family. In terms of assembly, PSII is composed of 1 copy each of membrane proteins PsbA, PsbB, PsbC, PsbD, PsbE, PsbF, PsbH, PsbI, PsbJ, PsbK, PsbL, PsbM, PsbT, PsbX, PsbY, PsbZ, Psb30/Ycf12, peripheral proteins PsbO, CyanoQ (PsbQ), PsbU, PsbV and a large number of cofactors. It forms dimeric complexes. The D1/D2 heterodimer binds P680, chlorophylls that are the primary electron donor of PSII, and subsequent electron acceptors. It shares a non-heme iron and each subunit binds pheophytin, quinone, additional chlorophylls, carotenoids and lipids. There is also a Cl(-1) ion associated with D1 and D2, which is required for oxygen evolution. The PSII complex binds additional chlorophylls, carotenoids and specific lipids. is required as a cofactor.

It localises to the cellular thylakoid membrane. The enzyme catalyses 2 a plastoquinone + 4 hnu + 2 H2O = 2 a plastoquinol + O2. Its function is as follows. Photosystem II (PSII) is a light-driven water:plastoquinone oxidoreductase that uses light energy to abstract electrons from H(2)O, generating O(2) and a proton gradient subsequently used for ATP formation. It consists of a core antenna complex that captures photons, and an electron transfer chain that converts photonic excitation into a charge separation. The D1/D2 (PsbA/PsbD) reaction center heterodimer binds P680, the primary electron donor of PSII as well as several subsequent electron acceptors. D2 is needed for assembly of a stable PSII complex. This chain is Photosystem II D2 protein, found in Synechococcus sp. (strain JA-3-3Ab) (Cyanobacteria bacterium Yellowstone A-Prime).